Reading from the N-terminus, the 143-residue chain is Transcriptional regulator MraZ (143 aa).

2 SpoVT-AbrB domains span residues 5–47 (EYFH…PVSA) and 76–119 (ASNQ…DKEK).

It belongs to the MraZ family. Forms oligomers.

It localises to the cytoplasm. The protein localises to the nucleoid. This is Transcriptional regulator MraZ from Finegoldia magna (strain ATCC 29328 / DSM 20472 / WAL 2508) (Peptostreptococcus magnus).